Here is a 398-residue protein sequence, read N- to C-terminus: Phosphoglycerate kinase (398 aa).

Substrate contacts are provided by residues 23–25, Arg-38, 61–64, Arg-122, and Arg-155; these read DFN and HMGK. ATP is bound by residues Lys-206, Gly-297, Glu-328, and 354–357; that span reads GGDS.

The protein belongs to the phosphoglycerate kinase family. In terms of assembly, monomer.

Its subcellular location is the cytoplasm. It catalyses the reaction (2R)-3-phosphoglycerate + ATP = (2R)-3-phospho-glyceroyl phosphate + ADP. It functions in the pathway carbohydrate degradation; glycolysis; pyruvate from D-glyceraldehyde 3-phosphate: step 2/5. The protein is Phosphoglycerate kinase of Clostridium botulinum (strain Langeland / NCTC 10281 / Type F).